Here is a 490-residue protein sequence, read N- to C-terminus: Glycine--tRNA ligase (490 aa).

Positions 99 and 163 each coordinate substrate. Residues 195–197, 205–210, 282–283, and 326–329 contribute to the ATP site; these read RNE, FRTREF, EL, and GLTR. A substrate-binding site is contributed by 210-214; that stretch reads FEQME. Residue 322 to 326 participates in substrate binding; the sequence is EPAAG. The interval 470 to 490 is disordered; that stretch reads PVEMGGEPWPESGVQEAGGLY.

Belongs to the class-II aminoacyl-tRNA synthetase family. In terms of assembly, homodimer.

It is found in the cytoplasm. The catalysed reaction is tRNA(Gly) + glycine + ATP = glycyl-tRNA(Gly) + AMP + diphosphate. Catalyzes the attachment of glycine to tRNA(Gly). This chain is Glycine--tRNA ligase, found in Bifidobacterium longum (strain NCC 2705).